The primary structure comprises 406 residues: CCA-adding enzyme (406 aa).

Gly32 and Arg35 together coordinate ATP. 2 residues coordinate CTP: Gly32 and Arg35. Mg(2+) is bound by residues Asp45 and Asp47. The ATP site is built by Arg116, Asp159, Arg162, Arg165, and Arg168. Residues Arg116, Asp159, Arg162, Arg165, and Arg168 each contribute to the CTP site.

It belongs to the tRNA nucleotidyltransferase/poly(A) polymerase family. Bacterial CCA-adding enzyme type 3 subfamily. In terms of assembly, homodimer. It depends on Mg(2+) as a cofactor.

The catalysed reaction is a tRNA precursor + 2 CTP + ATP = a tRNA with a 3' CCA end + 3 diphosphate. The enzyme catalyses a tRNA with a 3' CCA end + 2 CTP + ATP = a tRNA with a 3' CCACCA end + 3 diphosphate. In terms of biological role, catalyzes the addition and repair of the essential 3'-terminal CCA sequence in tRNAs without using a nucleic acid template. Adds these three nucleotides in the order of C, C, and A to the tRNA nucleotide-73, using CTP and ATP as substrates and producing inorganic pyrophosphate. tRNA 3'-terminal CCA addition is required both for tRNA processing and repair. Also involved in tRNA surveillance by mediating tandem CCA addition to generate a CCACCA at the 3' terminus of unstable tRNAs. While stable tRNAs receive only 3'-terminal CCA, unstable tRNAs are marked with CCACCA and rapidly degraded. The polypeptide is CCA-adding enzyme (Enterococcus faecalis (strain ATCC 700802 / V583)).